A 296-amino-acid chain; its full sequence is Protoheme IX farnesyltransferase (296 aa).

The Cytoplasmic segment spans residues 1-9 (MMFKQYLQV). A helical membrane pass occupies residues 10 to 28 (TKPGIIFGNLISVIGGFLL). Residues 29-37 (ASKGSIDYP) are Periplasmic-facing. Residues 38–56 (LFIYTLVGVSLVVASGCVF) traverse the membrane as a helical segment. The Cytoplasmic portion of the chain corresponds to 57–78 (NNYIDRDIDRKMERTKNRVLVK). A helical transmembrane segment spans residues 79–97 (GLISPAVSLVYATLLGIAG). The Periplasmic portion of the chain corresponds to 98-107 (FMLLWFGANP). The helical transmembrane segment at 108–126 (LACWLGVMGFVVYVGVYSL) threads the bilayer. Residues 127-197 (YMKRHSVYGT…YQAANIPVLP (71 aa)) are Cytoplasmic-facing. Residues 198–216 (VVKGISVAKNHITLYIIAF) traverse the membrane as a helical segment. Over 217–228 (AVATLMLSLGGY) the chain is Periplasmic. A helical transmembrane segment spans residues 229 to 247 (AGYKYLVVAAAVSVWWLGM). The Cytoplasmic segment spans residues 248 to 268 (ALRGYKVADDRIWARKLFGFS). The helical transmembrane segment at 269–287 (IIAITALSVMMSVDFMVPD) threads the bilayer. Residues 288–296 (SHTLLAAVW) are Periplasmic-facing.

Belongs to the UbiA prenyltransferase family. Protoheme IX farnesyltransferase subfamily.

The protein resides in the cell inner membrane. The catalysed reaction is heme b + (2E,6E)-farnesyl diphosphate + H2O = Fe(II)-heme o + diphosphate. The protein operates within porphyrin-containing compound metabolism; heme O biosynthesis; heme O from protoheme: step 1/1. Functionally, converts heme B (protoheme IX) to heme O by substitution of the vinyl group on carbon 2 of heme B porphyrin ring with a hydroxyethyl farnesyl side group. This Shigella flexneri protein is Protoheme IX farnesyltransferase.